A 353-amino-acid polypeptide reads, in one-letter code: Photosystem II D2 protein (353 aa).

N-acetylthreonine is present on Thr2. Thr2 carries the phosphothreonine modification. A helical transmembrane segment spans residues Cys41–Thr61. Residue His118 coordinates chlorophyll a. The helical transmembrane segment at Gly125–Pro141 threads the bilayer. Gln130 and Asn143 together coordinate pheophytin a. Residues Val153–Ser166 form a helical membrane-spanning segment. Chlorophyll a is bound at residue His198. A helical membrane pass occupies residues Ala208–Asp228. Positions 215 and 262 each coordinate a plastoquinone. A Fe cation-binding site is contributed by His215. His269 lines the Fe cation pocket. A helical membrane pass occupies residues Gly279–Arg295.

The protein belongs to the reaction center PufL/M/PsbA/D family. In terms of assembly, PSII is composed of 1 copy each of membrane proteins PsbA, PsbB, PsbC, PsbD, PsbE, PsbF, PsbH, PsbI, PsbJ, PsbK, PsbL, PsbM, PsbT, PsbX, PsbY, PsbZ, Psb30/Ycf12, at least 3 peripheral proteins of the oxygen-evolving complex and a large number of cofactors. It forms dimeric complexes. The cofactor is The D1/D2 heterodimer binds P680, chlorophylls that are the primary electron donor of PSII, and subsequent electron acceptors. It shares a non-heme iron and each subunit binds pheophytin, quinone, additional chlorophylls, carotenoids and lipids. There is also a Cl(-1) ion associated with D1 and D2, which is required for oxygen evolution. The PSII complex binds additional chlorophylls, carotenoids and specific lipids..

It localises to the plastid. The protein localises to the chloroplast thylakoid membrane. The enzyme catalyses 2 a plastoquinone + 4 hnu + 2 H2O = 2 a plastoquinol + O2. In terms of biological role, photosystem II (PSII) is a light-driven water:plastoquinone oxidoreductase that uses light energy to abstract electrons from H(2)O, generating O(2) and a proton gradient subsequently used for ATP formation. It consists of a core antenna complex that captures photons, and an electron transfer chain that converts photonic excitation into a charge separation. The D1/D2 (PsbA/PsbD) reaction center heterodimer binds P680, the primary electron donor of PSII as well as several subsequent electron acceptors. D2 is needed for assembly of a stable PSII complex. This is Photosystem II D2 protein from Nandina domestica (Heavenly bamboo).